Reading from the N-terminus, the 425-residue chain is uncharacterized protein (425 aa).

A TRAM domain is found at 1–57 (MKDKPLKLTVEKLVYGGYGFSRLNGKAVFVRFASPKELVEAKVVKEKKDYTEAVVTK). Positions 70, 76, 79, and 153 each coordinate [4Fe-4S] cluster. S-adenosyl-L-methionine contacts are provided by Gln-260, Asp-308, and Asp-354. Catalysis depends on Cys-381, which acts as the Nucleophile.

It belongs to the class I-like SAM-binding methyltransferase superfamily. RNA M5U methyltransferase family.

This is an uncharacterized protein from Aquifex aeolicus (strain VF5).